The following is a 179-amino-acid chain: Large ribosomal subunit protein uL5 (179 aa).

Belongs to the universal ribosomal protein uL5 family. Part of the 50S ribosomal subunit; part of the 5S rRNA/L5/L18/L25 subcomplex. Contacts the 5S rRNA and the P site tRNA. Forms a bridge to the 30S subunit in the 70S ribosome.

Functionally, this is one of the proteins that bind and probably mediate the attachment of the 5S RNA into the large ribosomal subunit, where it forms part of the central protuberance. In the 70S ribosome it contacts protein S13 of the 30S subunit (bridge B1b), connecting the 2 subunits; this bridge is implicated in subunit movement. Contacts the P site tRNA; the 5S rRNA and some of its associated proteins might help stabilize positioning of ribosome-bound tRNAs. The sequence is that of Large ribosomal subunit protein uL5 from Rickettsia typhi (strain ATCC VR-144 / Wilmington).